Reading from the N-terminus, the 426-residue chain is Serine--tRNA ligase (426 aa).

The segment at 36 to 66 (KRRHLQERTQDLQSQRNTISKEIGQKKAKGE) is disordered. Over residues 46-55 (DLQSQRNTIS) the composition is skewed to polar residues. 233-235 (TAE) is an L-serine binding site. 264–266 (RSE) lines the ATP pocket. An L-serine-binding site is contributed by glutamate 287. 351-354 (EISS) contributes to the ATP binding site. An L-serine-binding site is contributed by serine 387.

Belongs to the class-II aminoacyl-tRNA synthetase family. Type-1 seryl-tRNA synthetase subfamily. As to quaternary structure, homodimer. The tRNA molecule binds across the dimer.

The protein localises to the cytoplasm. The catalysed reaction is tRNA(Ser) + L-serine + ATP = L-seryl-tRNA(Ser) + AMP + diphosphate + H(+). It carries out the reaction tRNA(Sec) + L-serine + ATP = L-seryl-tRNA(Sec) + AMP + diphosphate + H(+). Its pathway is aminoacyl-tRNA biosynthesis; selenocysteinyl-tRNA(Sec) biosynthesis; L-seryl-tRNA(Sec) from L-serine and tRNA(Sec): step 1/1. Its function is as follows. Catalyzes the attachment of serine to tRNA(Ser). Is also able to aminoacylate tRNA(Sec) with serine, to form the misacylated tRNA L-seryl-tRNA(Sec), which will be further converted into selenocysteinyl-tRNA(Sec). The polypeptide is Serine--tRNA ligase (Francisella tularensis subsp. novicida (strain U112)).